A 149-amino-acid polypeptide reads, in one-letter code: 3-dehydroquinate dehydratase (149 aa).

The Proton acceptor role is filled by Y26. Residues N77, H83, and D90 each coordinate substrate. The Proton donor role is filled by H103. Residues 104–105 and R114 contribute to the substrate site; that span reads LS.

This sequence belongs to the type-II 3-dehydroquinase family. Homododecamer.

It catalyses the reaction 3-dehydroquinate = 3-dehydroshikimate + H2O. Its pathway is metabolic intermediate biosynthesis; chorismate biosynthesis; chorismate from D-erythrose 4-phosphate and phosphoenolpyruvate: step 3/7. In terms of biological role, catalyzes a trans-dehydration via an enolate intermediate. The polypeptide is 3-dehydroquinate dehydratase (Haemophilus influenzae (strain PittGG)).